We begin with the raw amino-acid sequence, 139 residues long: Large ribosomal subunit protein uL16 (139 aa).

The segment covering 1–21 has biased composition (basic residues); sequence MLSPRKTKFRKQHRGRMRGKA. The segment at 1–23 is disordered; that stretch reads MLSPRKTKFRKQHRGRMRGKATR.

It belongs to the universal ribosomal protein uL16 family. As to quaternary structure, part of the 50S ribosomal subunit.

Its function is as follows. Binds 23S rRNA and is also seen to make contacts with the A and possibly P site tRNAs. The chain is Large ribosomal subunit protein uL16 from Acaryochloris marina (strain MBIC 11017).